We begin with the raw amino-acid sequence, 673 residues long: UvrABC system protein C (673 aa).

A GIY-YIG domain is found at Val16–Val95. One can recognise a UVR domain in the interval Asp208–Ala243. The disordered stretch occupies residues Arg488–Arg526.

It belongs to the UvrC family. As to quaternary structure, interacts with UvrB in an incision complex.

It is found in the cytoplasm. Functionally, the UvrABC repair system catalyzes the recognition and processing of DNA lesions. UvrC both incises the 5' and 3' sides of the lesion. The N-terminal half is responsible for the 3' incision and the C-terminal half is responsible for the 5' incision. This Nocardia farcinica (strain IFM 10152) protein is UvrABC system protein C.